A 254-amino-acid chain; its full sequence is Type III pantothenate kinase (254 aa).

Residue 7-14 (DVGNTRLK) coordinates ATP. Residues Tyr-96 and 103 to 106 (GSDR) each bind substrate. Asp-105 serves as the catalytic Proton acceptor. Thr-133 provides a ligand contact to ATP. A substrate-binding site is contributed by Thr-183.

It belongs to the type III pantothenate kinase family. As to quaternary structure, homodimer. It depends on NH4(+) as a cofactor. K(+) serves as cofactor.

The protein resides in the cytoplasm. The catalysed reaction is (R)-pantothenate + ATP = (R)-4'-phosphopantothenate + ADP + H(+). The protein operates within cofactor biosynthesis; coenzyme A biosynthesis; CoA from (R)-pantothenate: step 1/5. Functionally, catalyzes the phosphorylation of pantothenate (Pan), the first step in CoA biosynthesis. This is Type III pantothenate kinase from Paracidovorax citrulli (strain AAC00-1) (Acidovorax citrulli).